The following is a 105-amino-acid chain: Nucleoid-associated protein EAT1b_1710 (105 aa).

The span at 1–16 shows a compositional bias: low complexity; sequence MRGMGNMNNMMKQMQK. The interval 1 to 26 is disordered; the sequence is MRGMGNMNNMMKQMQKMQKDMAKAQE. Over residues 17–26 the composition is skewed to basic and acidic residues; that stretch reads MQKDMAKAQE.

The protein belongs to the YbaB/EbfC family. As to quaternary structure, homodimer.

Its subcellular location is the cytoplasm. The protein localises to the nucleoid. In terms of biological role, binds to DNA and alters its conformation. May be involved in regulation of gene expression, nucleoid organization and DNA protection. The chain is Nucleoid-associated protein EAT1b_1710 from Exiguobacterium sp. (strain ATCC BAA-1283 / AT1b).